The following is a 572-amino-acid chain: MTNKEIIKRLYHEIIPYKIPLFIAMFAMIVVAALTGAQAYLVKDLLDKIFMEKDVFFLQILPLIIIAIFFTKGVLYYTYAIILERVGQSIIRDFRLKIFAHIHRQSLSFFHNTPTGTLISRVLSDVALMQQAVSTVIIQLLRDFFQVIFLLGVIFYMNWKLALICFLIIPLAAIPIVKFGKIFRKLSTKTQEETAEVSNMLHETISGSRIVKAFCREDYEVERFHRQVETLFTITMKNAKYRVFQSPLMEIIGGFAVAGIIWVGGSEVINGSATPGTFFAFLTAMITAYDPVKRVSQVNSTIQQGLASAQRVFAILDIKPEIEDKPEATSLAPFKESIEFHDVSFSYGTEKILSHINLKVPAGEALAIVGPSGGGKTTLTNLIPRFIDLQEGSITIDGTDIRDVTTNSLRNQIAMVTQQTILFNDTIRNNIAYGKDSCTEEEIRRAAKAAHALTFIEELPNGFDTALGEGGAKLSGGQRQRISIARALLADAPILILDEATSALDTESEREVQKALENLMQNRTTFVIAHRLSTIKNASRIVVVKKGKIVEEGSHEELLKLEGEYQLLYNMQ.

A run of 5 helical transmembrane segments spans residues 14–34 (IIPYKIPLFIAMFAMIVVAAL), 55–75 (VFFLQILPLIIIAIFFTKGVL), 148–168 (IFLLGVIFYMNWKLALICFLI), 249–269 (MEIIGGFAVAGIIWVGGSEVI), and 272–292 (SATPGTFFAFLTAMITAYDPV). The ABC transmembrane type-1 domain maps to 22-304 (FIAMFAMIVV…VSQVNSTIQQ (283 aa)). The region spanning 338–571 (IEFHDVSFSY…EGEYQLLYNM (234 aa)) is the ABC transporter domain. 370 to 377 (GPSGGGKT) is an ATP binding site.

Belongs to the ABC transporter superfamily. Lipid exporter (TC 3.A.1.106) family. In terms of assembly, homodimer.

Its subcellular location is the cell inner membrane. It carries out the reaction ATP + H2O + lipid A-core oligosaccharideSide 1 = ADP + phosphate + lipid A-core oligosaccharideSide 2.. Involved in lipopolysaccharide (LPS) biosynthesis. Translocates lipid A-core from the inner to the outer leaflet of the inner membrane. Transmembrane domains (TMD) form a pore in the inner membrane and the ATP-binding domain (NBD) is responsible for energy generation. This chain is ATP-dependent lipid A-core flippase, found in Desulfotalea psychrophila (strain LSv54 / DSM 12343).